A 234-amino-acid polypeptide reads, in one-letter code: Probable Ufm1-specific protease 1 (234 aa).

Catalysis depends on residues Cys-70, Asp-194, and His-196.

This sequence belongs to the peptidase C78 family.

Thiol protease which recognizes and hydrolyzes the peptide bond at the C-terminal Gly of UFM1, a ubiquitin-like modifier protein bound to a number of target proteins. In Drosophila melanogaster (Fruit fly), this protein is Probable Ufm1-specific protease 1.